Consider the following 32-residue polypeptide: Growth hormone-related protein 4 (32 aa).

An intrachain disulfide couples cysteine 4 to cysteine 11.

It belongs to the somatotropin/prolactin family. Post-translationally, glycosylated. As to expression, placental basal zone cells.

It localises to the secreted. In Rattus norvegicus (Rat), this protein is Growth hormone-related protein 4.